Here is a 294-residue protein sequence, read N- to C-terminus: Osteopontin (294 aa).

Positions 1-16 (MRLAVICFCLFGIASS) are cleaved as a signal peptide. Phosphoserine occurs at positions 24, 26, 27, 61, 62, 75, 77, 80, 106, 109, 112, 115, and 118. Residues 42 to 274 (WLVPDPSQKQ…LVLDPKSKED (233 aa)) form a disordered region. A compositionally biased stretch (polar residues) spans 48 to 61 (SQKQNLLAPQNAVS). The span at 85-110 (DDDDDDDDDDGDHAESEDSVDSDESD) shows a compositional bias: acidic residues. The segment covering 121–130 (TVTASTQADT) has biased composition (polar residues). Residues Thr-123, Thr-132, and Thr-137 are each glycosylated (O-linked (GalNAc...) threonine). A Cell attachment site motif is present at residues 144–146 (RGD). 2 positions are modified to phosphothreonine: Thr-170 and Thr-175. Residues 174–187 (LTSHMKSGESKESL) are compositionally biased toward basic and acidic residues. Phosphoserine occurs at positions 176, 180, 200, 209, 213, and 219. A compositionally biased stretch (polar residues) spans 197–216 (SMPSDQDNNGKGSHESSQLD). The O-linked (Xyl...) (chondroitin sulfate) serine glycan is linked to Ser-219. Residues 220–232 (LETHRLEHSKESQ) show a composition bias toward basic and acidic residues. Thr-222 carries the phosphothreonine modification. 14 positions are modified to phosphoserine: Ser-228, Ser-231, Ser-234, Ser-238, Ser-243, Ser-247, Ser-250, Ser-255, Ser-260, Ser-271, Ser-283, Ser-288, Ser-290, and Ser-291. The segment covering 234-249 (SADQSDVIDSQASSKA) has biased composition (polar residues). Positions 263–274 (DKLVLDPKSKED) are enriched in basic and acidic residues. Residue Ser-288 is glycosylated (O-linked (Xyl...) (chondroitin sulfate) serine).

This sequence belongs to the osteopontin family. As to quaternary structure, interacts (via N-terminus) with integrin ITGA9:ITGB1. In terms of processing, extensively phosphorylated by FAM20C in the extracellular medium at multiple sites within the S-x-E/pS motif. The phosphorylated form inhibits hydroxyapatite crystallization. Dephosphorylation via a mechanism involving ALPL/TNAP promotes hydroxyapatite crystallization. O-glycosylated. Post-translationally, forms covalent cross-links mediated by transglutaminase TGM2, between a glutamine and the epsilon-amino group of a lysine residue, forming homopolymers and heteropolymers, increasing its collagen binding properties.

It localises to the secreted. Functionally, major non-collagenous bone protein that binds tightly to hydroxyapatite. Appears to form an integral part of the mineralized matrix. Probably important to cell-matrix interaction. In terms of biological role, acts as a cytokine involved in enhancing production of interferon-gamma and interleukin-12 and reducing production of interleukin-10 and is essential in the pathway that leads to type I immunity. The chain is Osteopontin (Spp1) from Mus musculus (Mouse).